The sequence spans 233 residues: Uracil-DNA glycosylase (233 aa).

Residue Asp70 is the Proton acceptor of the active site.

It belongs to the uracil-DNA glycosylase (UDG) superfamily. UNG family.

The protein localises to the cytoplasm. The catalysed reaction is Hydrolyzes single-stranded DNA or mismatched double-stranded DNA and polynucleotides, releasing free uracil.. Its function is as follows. Excises uracil residues from the DNA which can arise as a result of misincorporation of dUMP residues by DNA polymerase or due to deamination of cytosine. In Oleidesulfovibrio alaskensis (strain ATCC BAA-1058 / DSM 17464 / G20) (Desulfovibrio alaskensis), this protein is Uracil-DNA glycosylase.